The chain runs to 87 residues: U3-theraphotoxin-Hhn1p (87 aa).

An N-terminal signal peptide occupies residues 1 to 24 (MVNMKASMFLTFAGLVLLFVVCYA). Residues 25–52 (SESEEKEFPKEMLSSIFAVDNDFKQEER) constitute a propeptide that is removed on maturation. 3 disulfides stabilise this stretch: Cys-54/Cys-67, Cys-61/Cys-72, and Cys-66/Cys-79.

This sequence belongs to the neurotoxin 10 (Hwtx-1) family. 51 (Hntx-8) subfamily. Hntx-8 sub-subfamily. In terms of tissue distribution, expressed by the venom gland.

It is found in the secreted. In terms of biological role, ion channel inhibitor. The polypeptide is U3-theraphotoxin-Hhn1p (Cyriopagopus hainanus (Chinese bird spider)).